A 588-amino-acid chain; its full sequence is Outer membrane transporter CdiB (588 aa).

Residues 33–55 (VVRYFSLLPCLCILSFSSPAAML) traverse the membrane as a helical segment. Residues 104 to 179 (FTVSRIVVSG…GVLHITVMEG (76 aa)) form the POTRA domain.

This sequence belongs to the TPS (TC 1.B.20) family.

Its subcellular location is the cell outer membrane. Potential outer membrane protein component of a toxin-immunity protein module, which functions as a cellular contact-dependent growth inhibition (CDI) system. CDI modules allow bacteria to communicate with and inhibit the growth of closely related neighboring bacteria in a contact-dependent fashion. This protein may be required for secretion and assembly of the CdiA toxin protein. Its function is as follows. Probable member of a two partner secretion pathway (TPS) in which it mediates the secretion of CdiA. The protein is Outer membrane transporter CdiB of Escherichia coli O6:K15:H31 (strain 536 / UPEC).